We begin with the raw amino-acid sequence, 340 residues long: Selenide, water dikinase (340 aa).

C13 is an active-site residue. Residues K16 and 43–45 each bind ATP; that span reads ASD. D46 is a Mg(2+) binding site. Residues D63, D86, and 133-135 contribute to the ATP site; that span reads GHS. D86 contacts Mg(2+). D221 provides a ligand contact to Mg(2+).

It belongs to the selenophosphate synthase 1 family. Class I subfamily. As to quaternary structure, homodimer. Mg(2+) serves as cofactor.

It catalyses the reaction hydrogenselenide + ATP + H2O = selenophosphate + AMP + phosphate + 2 H(+). In terms of biological role, synthesizes selenophosphate from selenide and ATP. The chain is Selenide, water dikinase from Desulfitobacterium hafniense (strain DSM 10664 / DCB-2).